The following is a 147-amino-acid chain: Protein-export protein SecB (147 aa).

This sequence belongs to the SecB family. Homotetramer, a dimer of dimers. One homotetramer interacts with 1 SecA dimer.

It is found in the cytoplasm. Its function is as follows. One of the proteins required for the normal export of preproteins out of the cell cytoplasm. It is a molecular chaperone that binds to a subset of precursor proteins, maintaining them in a translocation-competent state. It also specifically binds to its receptor SecA. The sequence is that of Protein-export protein SecB from Neisseria meningitidis serogroup C (strain 053442).